Reading from the N-terminus, the 131-residue chain is ER membrane protein complex subunit 5 (131 aa).

The Cytoplasmic portion of the chain corresponds to 1-3; it reads MAP. Residues 4–22 traverse the membrane as a helical segment; sequence SLWKGLVGIGLFALAHAAL. Residues 23–43 are Lumenal-facing; that stretch reads SAAQHRSYMRLTEKEDESLPI. A helical transmembrane segment spans residues 44-63; sequence DIVLQTLLAFAVTCYGIVHI. Residues 64 to 131 are Cytoplasmic-facing; that stretch reads AGEFKDMDAT…KLRKLESLRR (68 aa). Ser120 is subject to Phosphoserine.

This sequence belongs to the membrane magnesium transporter (TC 1.A.67) family. As to quaternary structure, component of the ER membrane protein complex (EMC).

It is found in the endoplasmic reticulum membrane. Its subcellular location is the golgi apparatus membrane. The protein localises to the early endosome membrane. Its function is as follows. Part of the endoplasmic reticulum membrane protein complex (EMC) that enables the energy-independent insertion into endoplasmic reticulum membranes of newly synthesized membrane proteins. Preferentially accommodates proteins with transmembrane domains that are weakly hydrophobic or contain destabilizing features such as charged and aromatic residues. Involved in the cotranslational insertion of multi-pass membrane proteins in which stop-transfer membrane-anchor sequences become ER membrane spanning helices. It is also required for the post-translational insertion of tail-anchored/TA proteins in endoplasmic reticulum membranes. By mediating the proper cotranslational insertion of N-terminal transmembrane domains in an N-exo topology, with translocated N-terminus in the lumen of the ER, controls the topology of multi-pass membrane proteins like the G protein-coupled receptors. By regulating the insertion of various proteins in membranes, it is indirectly involved in many cellular processes. May be involved in Mg(2+) transport. This is ER membrane protein complex subunit 5 from Pongo abelii (Sumatran orangutan).